The chain runs to 1386 residues: Adhesin AWP3b (1386 aa).

The signal sequence occupies residues 1–19 (MISFVTLLAILGLLSISWA). 3 disulfide bridges follow: cysteine 115-cysteine 145, cysteine 144-cysteine 178, and cysteine 304-cysteine 341. N-linked (GlcNAc...) asparagine glycosylation is present at asparagine 117. Asparagine 315, asparagine 345, asparagine 468, and asparagine 526 each carry an N-linked (GlcNAc...) asparagine glycan. Residues 429-507 (TTDSPGHTIT…SSPTSDFSSV (79 aa)) form a disordered region. Disordered regions lie at residues 530–553 (IVDSSSSSASSLPSSMSSSLSSSM) and 612–690 (TTDS…FSSV). N-linked (GlcNAc...) asparagine glycosylation is found at asparagine 651 and asparagine 709. 2 disordered regions span residues 714-739 (VDSSSSSASSLPSSMPSSLPSSMSSS) and 795-873 (TTDS…FSSV). N-linked (GlcNAc...) asparagine glycans are attached at residues asparagine 834, asparagine 898, asparagine 1008, asparagine 1017, and asparagine 1096. The segment at 1000-1032 (TIQESELSNTSRTTMTSNSSVSISSTSSRSSFS) is disordered. 2 stretches are compositionally biased toward polar residues: residues 1140–1150 (SHPVATNSGDK) and 1159–1177 (QVSTTMTSSGPTPDTSSFD). A disordered region spans residues 1140–1186 (SHPVATNSGDKPTTPKRSEQVSTTMTSSGPTPDTSSFDTDGMSAYSR). An N-linked (GlcNAc...) asparagine glycan is attached at asparagine 1197. A compositionally biased stretch (polar residues) spans 1198-1218 (KSSTSQLGNNKQTFSNLQLES). The segment at 1198-1227 (KSSTSQLGNNKQTFSNLQLESTRPHSENEV) is disordered. Asparagine 1229 is a glycosylation site (N-linked (GlcNAc...) asparagine). Positions 1241-1259 (STYGTNNVNPLSPTGSISI) are enriched in polar residues. The tract at residues 1241–1269 (STYGTNNVNPLSPTGSISIPLTEDGQGDN) is disordered. N-linked (GlcNAc...) asparagine glycosylation is present at asparagine 1287.

It localises to the secreted. Its subcellular location is the cell wall. Its function is as follows. May play a role in cell adhesion. The protein is Adhesin AWP3b of Candida glabrata (strain ATCC 2001 / BCRC 20586 / JCM 3761 / NBRC 0622 / NRRL Y-65 / CBS 138) (Yeast).